The primary structure comprises 583 residues: L-galactono-1,4-lactone dehydrogenase 1, mitochondrial (583 aa).

The transit peptide at 1-36 (MRRLLLAGILRRASSSPSSHHHLHLVRALSASSPLP) directs the protein to the mitochondrion. Residues 37–78 (ASDADLRKYAGYALLLLGCGAATYYSFPLPPDALHKKAVPFK) constitute a propeptide, removed in mature form. A helical membrane pass occupies residues 45 to 61 (YAGYALLLLGCGAATYY). The FAD-binding PCMH-type domain maps to 95–266 (THEVHTRVLL…AEVTLQCVER (172 aa)).

It depends on FAD as a cofactor.

It localises to the mitochondrion membrane. It carries out the reaction L-galactono-1,4-lactone + 4 Fe(III)-[cytochrome c] = L-dehydroascorbate + 4 Fe(II)-[cytochrome c] + 5 H(+). The protein operates within cofactor biosynthesis; L-ascorbate biosynthesis. Functionally, involved in the biosynthesis of ascorbic acid. This Oryza sativa subsp. japonica (Rice) protein is L-galactono-1,4-lactone dehydrogenase 1, mitochondrial (GLDH1).